A 1149-amino-acid polypeptide reads, in one-letter code: ATP-dependent helicase/deoxyribonuclease subunit B (1149 aa).

Positions 1–276 constitute a UvrD-like helicase ATP-binding domain; that stretch reads MAIRYIFGRA…INLDIEERKV (276 aa). An ATP-binding site is contributed by 8–15; it reads GRAGRGKS. One can recognise a UvrD-like helicase C-terminal domain in the interval 273–586; sequence ERKVLPKEKE…LVGSIERSKS (314 aa). Cys-786, Cys-1105, Cys-1108, and Cys-1114 together coordinate [4Fe-4S] cluster.

It belongs to the helicase family. AddB/RexB type 1 subfamily. As to quaternary structure, heterodimer of AddA and AddB. Mg(2+) serves as cofactor. [4Fe-4S] cluster is required as a cofactor.

In terms of biological role, the heterodimer acts as both an ATP-dependent DNA helicase and an ATP-dependent, dual-direction single-stranded exonuclease. Recognizes the chi site generating a DNA molecule suitable for the initiation of homologous recombination. The AddB subunit has 5' -&gt; 3' nuclease activity but not helicase activity. This chain is ATP-dependent helicase/deoxyribonuclease subunit B, found in Alkaliphilus metalliredigens (strain QYMF).